Reading from the N-terminus, the 169-residue chain is Ribosome maturation factor RimM (169 aa).

The PRC barrel domain occupies 97-169; sequence EDEYYWTDLV…IITADWGLDY (73 aa).

Belongs to the RimM family. Binds ribosomal protein uS19.

The protein resides in the cytoplasm. Functionally, an accessory protein needed during the final step in the assembly of 30S ribosomal subunit, possibly for assembly of the head region. Essential for efficient processing of 16S rRNA. May be needed both before and after RbfA during the maturation of 16S rRNA. It has affinity for free ribosomal 30S subunits but not for 70S ribosomes. In Neisseria meningitidis serogroup C / serotype 2a (strain ATCC 700532 / DSM 15464 / FAM18), this protein is Ribosome maturation factor RimM.